Reading from the N-terminus, the 569-residue chain is Urease subunit alpha (569 aa).

Residues 131–569 (GSIDTHIHFI…VPMAQRYFLL (439 aa)) form the Urease domain. Ni(2+) is bound by residues H136, H138, and K219. An N6-carboxylysine modification is found at K219. H221 contacts substrate. Ni(2+)-binding residues include H248 and H274. The active-site Proton donor is the H322. D362 is a Ni(2+) binding site.

It belongs to the metallo-dependent hydrolases superfamily. Urease alpha subunit family. As to quaternary structure, heterotrimer of UreA (gamma), UreB (beta) and UreC (alpha) subunits. Three heterotrimers associate to form the active enzyme. Ni cation serves as cofactor. Carboxylation allows a single lysine to coordinate two nickel ions.

The protein resides in the cytoplasm. It carries out the reaction urea + 2 H2O + H(+) = hydrogencarbonate + 2 NH4(+). It functions in the pathway nitrogen metabolism; urea degradation; CO(2) and NH(3) from urea (urease route): step 1/1. This is Urease subunit alpha from Prochlorococcus marinus (strain MIT 9215).